Reading from the N-terminus, the 501-residue chain is Protein YLS7 (501 aa).

Residues 25–45 (IAFAIGGLTSFVIFASLLLFT) traverse the membrane as a helical; Signal-anchor for type II membrane protein segment. The interval 69-131 (HSIHDPDRNP…NVSIDEEATQ (63 aa)) is disordered. The segment covering 78-89 (PSPVSSSESPPV) has biased composition (low complexity). Basic and acidic residues predominate over residues 94 to 113 (SDDKVLPKGSHDSNDVRLGE). Over residues 114 to 124 (ETNSGKSSNVS) the composition is skewed to polar residues. Residues 211-213 (GDS) carry the GDS motif motif. The tract at residues 438–467 (RHDGHPGPYRSPDPKKITKRGPDGQPPPQD) is disordered. Positions 449-459 (PDPKKITKRGP) are enriched in basic and acidic residues. A DCXHWCLPGXXDXWN motif motif is present at residues 467–481 (DCLHWCMPGPVDTWN).

The protein belongs to the PC-esterase family. TBL subfamily. In terms of tissue distribution, expressed in roots, cauline leaves and flowers.

The protein localises to the membrane. Functionally, may act as a bridging protein that binds pectin and other cell wall polysaccharides. Probably involved in maintaining esterification of pectins. May be involved in the specific O-acetylation of cell wall polymers. The protein is Protein YLS7 (YLS7) of Arabidopsis thaliana (Mouse-ear cress).